A 319-amino-acid polypeptide reads, in one-letter code: Putative G-protein coupled receptor B0244.7 (319 aa).

The N-linked (GlcNAc...) asparagine glycan is linked to N28. Transmembrane regions (helical) follow at residues 49-69 (AIFIIPCCMSFFALFLNIYIF), 107-127 (LPVIIFLTHFNFWVIALFIIF), 131-151 (SFLSFIGGMVGTTLTIYIAVV), 166-186 (VLLILLLWVSAITVAISCGIV), 206-226 (GPVLIFGIVCIATAFSICLVI), and 261-281 (LFAGFFVFATMAIFEIASAII).

The protein belongs to the G-protein coupled receptor 1 family. B0244 subfamily.

It is found in the cell membrane. In Caenorhabditis elegans, this protein is Putative G-protein coupled receptor B0244.7.